Consider the following 321-residue polypeptide: Replication factor C small subunit (321 aa).

43–50 (GFAGVGKT) contacts ATP.

The protein belongs to the activator 1 small subunits family. RfcS subfamily. In terms of assembly, heteromultimer composed of small subunits (RfcS) and large subunits (RfcL).

Its function is as follows. Part of the RFC clamp loader complex which loads the PCNA sliding clamp onto DNA. The polypeptide is Replication factor C small subunit (Methanosphaera stadtmanae (strain ATCC 43021 / DSM 3091 / JCM 11832 / MCB-3)).